The chain runs to 290 residues: MYG1 protein CPn_0489/CP_0265/CPj0489/CpB0509 (290 aa).

The protein belongs to the MYG1 family.

The protein is MYG1 protein CPn_0489/CP_0265/CPj0489/CpB0509 of Chlamydia pneumoniae (Chlamydophila pneumoniae).